The following is a 129-amino-acid chain: Small ribosomal subunit protein uS12 (129 aa).

2 disordered regions span residues 1-25 (MPTY…PALE) and 110-129 (RKQG…VTKK). Positions 10-20 (FGRKSKTRKTK) are enriched in basic residues.

The protein belongs to the universal ribosomal protein uS12 family. In terms of assembly, part of the 30S ribosomal subunit. Contacts proteins S8 and S17. May interact with IF1 in the 30S initiation complex.

With S4 and S5 plays an important role in translational accuracy. Its function is as follows. Interacts with and stabilizes bases of the 16S rRNA that are involved in tRNA selection in the A site and with the mRNA backbone. Located at the interface of the 30S and 50S subunits, it traverses the body of the 30S subunit contacting proteins on the other side and probably holding the rRNA structure together. The combined cluster of proteins S8, S12 and S17 appears to hold together the shoulder and platform of the 30S subunit. The chain is Small ribosomal subunit protein uS12 from Rickettsia conorii (strain ATCC VR-613 / Malish 7).